Reading from the N-terminus, the 145-residue chain is Brain and acute leukemia cytoplasmic protein (145 aa).

A lipid anchor (N-myristoyl glycine) is attached at G2. C3 carries the S-palmitoyl cysteine lipid modification. The interaction with CAMK2A stretch occupies residues 3–35 (CGGSRADAIEPRYYESWTRETESTWLTYTDSDA). A disordered region spans residues 36 to 113 (LPSAAATDSG…GLWTTEAKRD (78 aa)). Polar residues predominate over residues 83 to 106 (CGTQCPNSQSLSSGPLTQKQNGLW).

In terms of assembly, interacts with CAMK2A. In terms of processing, palmitoylation and myristoylation target the protein to the lipid rafts. As to expression, predominantly expressed in the brain (at protein level). Within the brain, found in most of forebrain structures, including the cerebral cortex, hippocampal formation, olfactory bulb, anterior olfactory nuclei, piriform cortex, tenia tecta and amygdaloid nuclei. Not detected in glial cells.

The protein resides in the cytoplasm. The protein localises to the synapse. It localises to the synaptosome. Its subcellular location is the membrane raft. It is found in the postsynaptic density. Its function is as follows. May play a synaptic role at the postsynaptic lipid rafts possibly through interaction with CAMK2A. The protein is Brain and acute leukemia cytoplasmic protein (Baalc) of Rattus norvegicus (Rat).